A 72-amino-acid chain; its full sequence is Sec-independent protein translocase protein TatA (72 aa).

Residues 1 to 21 traverse the membrane as a helical segment; the sequence is MPFGLGLPEILVIGVIALLIF. The tract at residues 41-72 is disordered; it reads KSGVSDEPAPQQSASKETAPNPPQSLPSGKDS.

This sequence belongs to the TatA/E family. Forms a complex with TatC.

It is found in the cell inner membrane. Its function is as follows. Part of the twin-arginine translocation (Tat) system that transports large folded proteins containing a characteristic twin-arginine motif in their signal peptide across membranes. TatA could form the protein-conducting channel of the Tat system. This chain is Sec-independent protein translocase protein TatA, found in Gloeobacter violaceus (strain ATCC 29082 / PCC 7421).